A 470-amino-acid polypeptide reads, in one-letter code: 3-isopropylmalate dehydratase large subunit (470 aa).

Positions 351, 411, and 414 each coordinate [4Fe-4S] cluster.

Belongs to the aconitase/IPM isomerase family. LeuC type 1 subfamily. As to quaternary structure, heterodimer of LeuC and LeuD. The cofactor is [4Fe-4S] cluster.

It catalyses the reaction (2R,3S)-3-isopropylmalate = (2S)-2-isopropylmalate. It functions in the pathway amino-acid biosynthesis; L-leucine biosynthesis; L-leucine from 3-methyl-2-oxobutanoate: step 2/4. Functionally, catalyzes the isomerization between 2-isopropylmalate and 3-isopropylmalate, via the formation of 2-isopropylmaleate. The polypeptide is 3-isopropylmalate dehydratase large subunit (Rhodopseudomonas palustris (strain BisB5)).